A 70-amino-acid chain; its full sequence is MPSVRVKENEPFEVAMRRFKRSIEKTGLLTELRAREFYEKPTTERKRKKAAAVKRHYKRLRSQMLPPKLY.

This sequence belongs to the bacterial ribosomal protein bS21 family.

The chain is Small ribosomal subunit protein bS21 from Laribacter hongkongensis (strain HLHK9).